A 57-amino-acid chain; its full sequence is Stress response protein (57 aa).

The short motif at 6 to 10 (RKERR) is the Nuclear localization signal element.

Mesophyll protoplasts.

The protein localises to the nucleus. Stress response. May play a role in the reentering of protoplasts into the cell cycle. This chain is Stress response protein, found in Nicotiana sylvestris (Wood tobacco).